A 489-amino-acid chain; its full sequence is Putative BTB/POZ domain-containing protein R773 (489 aa).

Residues 3–73 (SNIELVITDE…GNTSYKFQDK (71 aa)) form the BTB domain.

This sequence belongs to the mimivirus BTB/WD family.

In Acanthamoeba polyphaga (Amoeba), this protein is Putative BTB/POZ domain-containing protein R773.